Here is a 117-residue protein sequence, read N- to C-terminus: MDKKSARIRRAARARHMMRENGVTRLVIHRTPRHIYAQVIAPNGSEVLAAASTVEKAISEQVKYTGNKDAAAVVGKLVAERALAKGIKDVAFDRSGFKYHGRVQSLADAAREAGLQF.

It belongs to the universal ribosomal protein uL18 family. In terms of assembly, part of the 50S ribosomal subunit; part of the 5S rRNA/L5/L18/L25 subcomplex. Contacts the 5S and 23S rRNAs.

Functionally, this is one of the proteins that bind and probably mediate the attachment of the 5S RNA into the large ribosomal subunit, where it forms part of the central protuberance. The protein is Large ribosomal subunit protein uL18 of Mannheimia succiniciproducens (strain KCTC 0769BP / MBEL55E).